The primary structure comprises 41 residues: Photosystem I reaction center subunit IX (41 aa).

Residues 7–27 form a helical membrane-spanning segment; it reads YLSTAPVIALAWMSFTAGLLI.

It belongs to the PsaJ family.

The protein resides in the plastid. It is found in the chloroplast thylakoid membrane. May help in the organization of the PsaE and PsaF subunits. This Tupiella akineta (Green alga) protein is Photosystem I reaction center subunit IX.